Reading from the N-terminus, the 203-residue chain is Ras-related protein Rab-24 (203 aa).

Tyr17 is subject to Phosphotyrosine. GTP-binding residues include Gly19, Lys20, Thr21, and Thr40. Mg(2+) is bound by residues Thr21, Thr40, and Asp63. The switch I stretch occupies residues 30–45; that stretch reads DRFLVGPYQNTIGAAF. The interval 63 to 80 is switch II; it reads DTAGSERYEAMSRIYYRG. 4 residues coordinate GTP: Gly66, Lys121, Asp123, and Lys156. A Phosphotyrosine modification is found at Tyr172. Residues Cys200 and Cys201 are each lipidated (S-geranylgeranyl cysteine).

This sequence belongs to the small GTPase superfamily. Rab family. As to quaternary structure, interacts with ZFYVE20. Does not interact with the GDP dissociation inhibitors ARHGDIA and ARHGDIB. Mg(2+) is required as a cofactor. Prenylated; prenylation is required for RAB24 localization to autophagosomes. Isoprenylation is inefficient compared to other Rab family members. In terms of processing, phosphorylated at Tyr-17 and Tyr-172. Cytosolic pool of RAB24 is more phosphorylated than the membrane-associated pool. As to expression, widely expressed, with highest expression in brain.

The protein resides in the cytoplasm. It localises to the cytosol. It is found in the membrane. The protein localises to the cytoplasmic vesicle. Its subcellular location is the autophagosome membrane. The protein resides in the perinuclear region. It localises to the cytoskeleton. It is found in the spindle. It carries out the reaction GTP + H2O = GDP + phosphate + H(+). Regulated by guanine nucleotide exchange factors (GEFs) which promote the exchange of bound GDP for free GTP. Regulated by GTPase activating proteins (GAPs) which increase the GTP hydrolysis activity. Inhibited by GDP dissociation inhibitors (GDIs). Its function is as follows. The small GTPases Rab are key regulators of intracellular membrane trafficking, from the formation of transport vesicles to their fusion with membranes. Rabs cycle between an inactive GDP-bound form and an active GTP-bound form that is able to recruit to membranes different sets of downstream effectors directly responsible for vesicle formation, movement, tethering and fusion. RAB24 is an atypical RAB protein that presents low GTPase activity and thereby exists predominantly in the GTP-bound active state. RAB24 is required for the clearance of late autophagic vacuoles under basal conditions. It is not needed for starvation-induced autophagy. Involved in the modulation of meiotic apparatus assembly and meiotic progression during oocyte maturation, possibly through regulation of kinetochore-microtubule interaction. This Mus musculus (Mouse) protein is Ras-related protein Rab-24.